The primary structure comprises 624 residues: tRNA uridine 5-carboxymethylaminomethyl modification enzyme MnmG (624 aa).

Residues 13-18 (GGGHAG), V125, and S180 contribute to the FAD site. 273 to 287 (GPRYCPSIEDKIVRF) is a binding site for NAD(+). Q370 contributes to the FAD binding site.

The protein belongs to the MnmG family. Homodimer. Heterotetramer of two MnmE and two MnmG subunits. Requires FAD as cofactor.

It is found in the cytoplasm. Functionally, NAD-binding protein involved in the addition of a carboxymethylaminomethyl (cmnm) group at the wobble position (U34) of certain tRNAs, forming tRNA-cmnm(5)s(2)U34. The polypeptide is tRNA uridine 5-carboxymethylaminomethyl modification enzyme MnmG (Legionella pneumophila (strain Paris)).